Here is a 716-residue protein sequence, read N- to C-terminus: Cyclic nucleotide-gated ion channel 1 (716 aa).

Residues Met-1 to Lys-97 are Cytoplasmic-facing. A helical transmembrane segment spans residues Ile-98–Ile-118. Residues Ile-119–Met-132 are Extracellular-facing. The chain crosses the membrane as a helical span at residues Glu-133–Phe-153. Over Gln-154–His-187 the chain is Cytoplasmic. A helical membrane pass occupies residues Phe-188–Pro-208. Over His-209–Asn-220 the chain is Extracellular. Residues Met-221–Tyr-241 traverse the membrane as a helical segment. The Cytoplasmic segment spans residues Lys-242–Ala-259. The helical transmembrane segment at Ala-260 to Phe-280 threads the bilayer. The Extracellular segment spans residues Ser-281 to Ile-379. A helical membrane pass occupies residues Trp-380–Ile-400. At Gly-401–Asp-716 the chain is on the cytoplasmic side. Residues Met-486–Leu-610 and Glu-557 contribute to the a nucleoside 3',5'-cyclic phosphate site. A calmodulin-binding region spans residues Phe-602–Tyr-617. The 30-residue stretch at Lys-622–Arg-651 folds into the IQ domain. The interval Ser-689–Asp-716 is disordered.

Belongs to the cyclic nucleotide-gated cation channel (TC 1.A.1.5) family. As to quaternary structure, homotetramer or heterotetramer (Potential). Binds calmodulin-2/3/5 with a higher affinity than calmodulin-1/4. Expressed in the whole plant but only weakly in roots.

Its subcellular location is the cell membrane. Functionally, acts as a cyclic nucleotide-gated ion channel. Can be activated by cyclic AMP which leads to an opening of the cation channel. May be responsible for cAMP-induced calcium entry in cells and thus should be involved in the calcium signal transduction. Could transport K(+), Na(+) and Pb(2+). In Arabidopsis thaliana (Mouse-ear cress), this protein is Cyclic nucleotide-gated ion channel 1 (CNGC1).